Here is a 426-residue protein sequence, read N- to C-terminus: Serine--tRNA ligase (426 aa).

Position 232–234 (232–234 (TAE)) interacts with L-serine. An ATP-binding site is contributed by 263–265 (RRE). Glu286 serves as a coordination point for L-serine. 350 to 353 (EISS) is an ATP binding site. Residue Ser385 participates in L-serine binding.

Belongs to the class-II aminoacyl-tRNA synthetase family. Type-1 seryl-tRNA synthetase subfamily. In terms of assembly, homodimer. The tRNA molecule binds across the dimer.

Its subcellular location is the cytoplasm. It carries out the reaction tRNA(Ser) + L-serine + ATP = L-seryl-tRNA(Ser) + AMP + diphosphate + H(+). It catalyses the reaction tRNA(Sec) + L-serine + ATP = L-seryl-tRNA(Sec) + AMP + diphosphate + H(+). The protein operates within aminoacyl-tRNA biosynthesis; selenocysteinyl-tRNA(Sec) biosynthesis; L-seryl-tRNA(Sec) from L-serine and tRNA(Sec): step 1/1. Catalyzes the attachment of serine to tRNA(Ser). Is also able to aminoacylate tRNA(Sec) with serine, to form the misacylated tRNA L-seryl-tRNA(Sec), which will be further converted into selenocysteinyl-tRNA(Sec). The protein is Serine--tRNA ligase of Fervidobacterium nodosum (strain ATCC 35602 / DSM 5306 / Rt17-B1).